The primary structure comprises 93 residues: MPRSLKKGPFVDDHLLKKVDVQNDKNTKQVIKTWSRRSTIIPDFIGHTFAVHDGRKHVPVFVTEAMVGHKLGEFAPTRTFKGHIKDDRKSKRR.

It belongs to the universal ribosomal protein uS19 family.

Functionally, protein S19 forms a complex with S13 that binds strongly to the 16S ribosomal RNA. The chain is Small ribosomal subunit protein uS19 from Mycobacterium sp. (strain JLS).